Here is a 144-residue protein sequence, read N- to C-terminus: Ribonuclease H (144 aa).

The RNase H type-1 domain occupies 1–136; sequence MKIVTLFSDG…CDQMARNEAL (136 aa). Mg(2+) contacts are provided by Asp9, Glu47, Asp69, and Asp128.

The protein belongs to the RNase H family. Monomer. Requires Mg(2+) as cofactor.

It localises to the cytoplasm. It catalyses the reaction Endonucleolytic cleavage to 5'-phosphomonoester.. Endonuclease that specifically degrades the RNA of RNA-DNA hybrids. The protein is Ribonuclease H of Campylobacter concisus (strain 13826).